The sequence spans 164 residues: Lipoprotein signal peptidase (164 aa).

4 helical membrane-spanning segments follow: residues 11–31, 41–61, 64–84, and 92–112; these read YWVL…AVLS, VIPS…FSFL, QGGW…AYLV, and FAAL…GNVI. Active-site residues include D122 and D140. The helical transmembrane segment at 132–152 threads the bilayer; sequence FYPAFNIADSFICVGAVLAVL.

This sequence belongs to the peptidase A8 family.

It is found in the cell inner membrane. It catalyses the reaction Release of signal peptides from bacterial membrane prolipoproteins. Hydrolyzes -Xaa-Yaa-Zaa-|-(S,diacylglyceryl)Cys-, in which Xaa is hydrophobic (preferably Leu), and Yaa (Ala or Ser) and Zaa (Gly or Ala) have small, neutral side chains.. It participates in protein modification; lipoprotein biosynthesis (signal peptide cleavage). This protein specifically catalyzes the removal of signal peptides from prolipoproteins. The polypeptide is Lipoprotein signal peptidase (Neisseria gonorrhoeae (strain ATCC 700825 / FA 1090)).